Reading from the N-terminus, the 544-residue chain is Chaperonin GroEL (544 aa).

ATP is bound by residues 30-33 (TLGP), Lys-51, 87-91 (DGTTT), Gly-415, and Asp-495.

The protein belongs to the chaperonin (HSP60) family. Forms a cylinder of 14 subunits composed of two heptameric rings stacked back-to-back. Interacts with the co-chaperonin GroES.

Its subcellular location is the cytoplasm. The catalysed reaction is ATP + H2O + a folded polypeptide = ADP + phosphate + an unfolded polypeptide.. In terms of biological role, together with its co-chaperonin GroES, plays an essential role in assisting protein folding. The GroEL-GroES system forms a nano-cage that allows encapsulation of the non-native substrate proteins and provides a physical environment optimized to promote and accelerate protein folding. The sequence is that of Chaperonin GroEL from Neisseria meningitidis serogroup B (strain ATCC BAA-335 / MC58).